An 87-amino-acid polypeptide reads, in one-letter code: Small ribosomal subunit protein uS17 (87 aa).

The protein belongs to the universal ribosomal protein uS17 family. In terms of assembly, part of the 30S ribosomal subunit.

In terms of biological role, one of the primary rRNA binding proteins, it binds specifically to the 5'-end of 16S ribosomal RNA. The sequence is that of Small ribosomal subunit protein uS17 from Staphylococcus carnosus (strain TM300).